Reading from the N-terminus, the 556-residue chain is Endoplasmic reticulum membrane protein 65 (556 aa).

At 1–87 (MQHKDTAVAK…IRIPMFLEKF (87 aa)) the chain is on the cytoplasmic side. Ser22 bears the Phosphoserine mark. The chain crosses the membrane as a helical span at residues 88 to 108 (MLFALLTSLDCFLYYFTVLPI). The Lumenal segment spans residues 109–151 (RLIKGYVKQFKSYRQHYRLQQRSGHKNKIPFRYRITSREYKER). A helical transmembrane segment spans residues 152–172 (CMIFIIVISSILLSKLDTSKL). Topologically, residues 173–224 (YHRIKRQSTMKLYMLFSVLEMADKMLASLGQSLLTVMLSRKNSERILLHKCL) are cytoplasmic. A helical membrane pass occupies residues 225–245 (LVSMSLTYVTIHGYVLVYQAI). Residues 246-330 (SLNIAVNSYS…INFWSPRSTL (85 aa)) lie on the Lumenal side of the membrane. Asn318 carries N-linked (GlcNAc...) asparagine glycosylation. A helical membrane pass occupies residues 331–351 (SIVINILCGPMVSVVGSEVLV). Topologically, residues 352–391 (DWAKHAYITKFNRIRPQIYDKFYYIIYKDYSTRTHKLEDR) are cytoplasmic. The chain crosses the membrane as a helical span at residues 392–412 (LGLPLPAFVVLFIVMVRPTLF). The Lumenal segment spans residues 413 to 428 (KSSEPSYLPSLFRILF). A helical transmembrane segment spans residues 429 to 449 (MGASVFLLALLAKFTLDLILI). Over 450–556 (KWSKRIEQRF…RYKMVSKRIW (107 aa)) the chain is Cytoplasmic.

Belongs to the TAPT1 family. In terms of assembly, interacts with SLP1.

It is found in the endoplasmic reticulum membrane. It localises to the mitochondrion. May be involved in membrane protein folding. This Saccharomyces cerevisiae (strain ATCC 204508 / S288c) (Baker's yeast) protein is Endoplasmic reticulum membrane protein 65.